A 339-amino-acid polypeptide reads, in one-letter code: Nicotinate-nucleotide--dimethylbenzimidazole phosphoribosyltransferase (339 aa).

E306 (proton acceptor) is an active-site residue.

The protein belongs to the CobT family.

The catalysed reaction is 5,6-dimethylbenzimidazole + nicotinate beta-D-ribonucleotide = alpha-ribazole 5'-phosphate + nicotinate + H(+). Its pathway is nucleoside biosynthesis; alpha-ribazole biosynthesis; alpha-ribazole from 5,6-dimethylbenzimidazole: step 1/2. In terms of biological role, catalyzes the synthesis of alpha-ribazole-5'-phosphate from nicotinate mononucleotide (NAMN) and 5,6-dimethylbenzimidazole (DMB). The chain is Nicotinate-nucleotide--dimethylbenzimidazole phosphoribosyltransferase from Brucella anthropi (strain ATCC 49188 / DSM 6882 / CCUG 24695 / JCM 21032 / LMG 3331 / NBRC 15819 / NCTC 12168 / Alc 37) (Ochrobactrum anthropi).